The chain runs to 151 residues: Cytochrome c-type biogenesis protein CcmE (151 aa).

Residues 1–9 are Cytoplasmic-facing; sequence MKGLKKKRR. The helical; Signal-anchor for type II membrane protein transmembrane segment at 10–30 threads the bilayer; that stretch reads IQIITLAFVALAGSTALIGYA. At 31 to 151 the chain is on the periplasmic side; it reads MRDGINFFRS…FQHTEDQPQG (121 aa). The heme site is built by histidine 123 and tyrosine 127.

The protein belongs to the CcmE/CycJ family.

The protein resides in the cell inner membrane. Its function is as follows. Heme chaperone required for the biogenesis of c-type cytochromes. Transiently binds heme delivered by CcmC and transfers the heme to apo-cytochromes in a process facilitated by CcmF and CcmH. This chain is Cytochrome c-type biogenesis protein CcmE, found in Cereibacter sphaeroides (strain ATCC 17025 / ATH 2.4.3) (Rhodobacter sphaeroides).